A 414-amino-acid chain; its full sequence is Gamma-glutamyl phosphate reductase (414 aa).

It belongs to the gamma-glutamyl phosphate reductase family.

Its subcellular location is the cytoplasm. The catalysed reaction is L-glutamate 5-semialdehyde + phosphate + NADP(+) = L-glutamyl 5-phosphate + NADPH + H(+). Its pathway is amino-acid biosynthesis; L-proline biosynthesis; L-glutamate 5-semialdehyde from L-glutamate: step 2/2. Its function is as follows. Catalyzes the NADPH-dependent reduction of L-glutamate 5-phosphate into L-glutamate 5-semialdehyde and phosphate. The product spontaneously undergoes cyclization to form 1-pyrroline-5-carboxylate. The chain is Gamma-glutamyl phosphate reductase from Thermoanaerobacter sp. (strain X514).